The following is a 173-amino-acid chain: MFRPSTSLALRSTLRQLASASNQPIPPGSEINAVKRTVATILPPIRLYRRIIRAHRRLDPDMRAVGDNYVKDEFRRHKNIDNPLQIIGFLSSWKMYLDQLEVQQGQPGGFRGQRLDPQLLEKMSDEQIYQIHELMTATQEAYSDKAQAFPPEKQRELAEKAAADAGLSVKKDE.

A mitochondrion-targeting transit peptide spans 1–59 (MFRPSTSLALRSTLRQLASASNQPIPPGSEINAVKRTVATILPPIRLYRRIIRAHRRLD). Residues 149–173 (FPPEKQRELAEKAAADAGLSVKKDE) form a disordered region. Basic and acidic residues predominate over residues 152-162 (EKQRELAEKAA).

This sequence belongs to the complex I LYR family. SDHAF3 subfamily. Interacts with the iron-sulfur protein subunit within the SDH catalytic dimer.

It localises to the mitochondrion matrix. In terms of biological role, plays an essential role in the assembly of succinate dehydrogenase (SDH), an enzyme complex (also referred to as respiratory complex II) that is a component of both the tricarboxylic acid (TCA) cycle and the mitochondrial electron transport chain, and which couples the oxidation of succinate to fumarate with the reduction of ubiquinone (coenzyme Q) to ubiquinol. Promotes maturation of the iron-sulfur protein subunit of the SDH catalytic dimer, protecting it from the deleterious effects of oxidants. May act together with SDHAF1. The polypeptide is Succinate dehydrogenase assembly factor 3, mitochondrial (Mycosarcoma maydis (Corn smut fungus)).